The sequence spans 131 residues: Profilin-A (131 aa).

This sequence belongs to the profilin family. In terms of assembly, occurs in many kinds of cells as a complex with monomeric actin in a 1:1 ratio.

It is found in the cytoplasm. The protein localises to the cytoskeleton. Its function is as follows. Binds to actin and affects the structure of the cytoskeleton. At high concentrations, profilin prevents the polymerization of actin, whereas it enhances it at low concentrations. By binding to PIP2, it inhibits the formation of IP3 and DG. May serve as a modulator in pollen germination and pollen tube growth. This chain is Profilin-A, found in Oryza sativa subsp. japonica (Rice).